Reading from the N-terminus, the 314-residue chain is MTRTLPPGLTATAVVAASSANLGPGFDSMGLAIGLYDEIVVETTESGLVVEVEGEGSGQVPLDGSHLVVRAIERGLRETGVSAPGLIVRCRNDIPHSRGLGSSAAAVVGGLAAANGLAAQTDSTLMSPERLVQVSSEFEGHPDNAAAAVLGGAVVAWTAAGAGDPRYAAAPIRLHPDIAIFAAVPQVRSSTAETRVLLPEHVRHTDARFNLSRAALLVVALTERPDLLMEATEDVLHQPQRAAAMPASAEYLAMLRRCGVPAVLSGAGPAVLALSTETELPAEALRYGADHGFAVKRMSVGHGVSWTSGVAVRT.

Residue 95–105 (PHSRGLGSSAA) coordinates ATP.

The protein belongs to the GHMP kinase family. Homoserine kinase subfamily.

The protein resides in the cytoplasm. The catalysed reaction is L-homoserine + ATP = O-phospho-L-homoserine + ADP + H(+). It participates in amino-acid biosynthesis; L-threonine biosynthesis; L-threonine from L-aspartate: step 4/5. Its function is as follows. Catalyzes the ATP-dependent phosphorylation of L-homoserine to L-homoserine phosphate. This chain is Homoserine kinase, found in Mycolicibacterium vanbaalenii (strain DSM 7251 / JCM 13017 / BCRC 16820 / KCTC 9966 / NRRL B-24157 / PYR-1) (Mycobacterium vanbaalenii).